A 426-amino-acid chain; its full sequence is Protein EARLY STARVATION 1, chloroplastic (426 aa).

A chloroplast-targeting transit peptide spans 1 to 58 (MSEMAASSAISLLDIKLRRFGVGASNHELRLTKWFKGDQAGAPTRRFTCFADMLAPIR). Disordered stretches follow at residues 106–127 (CTPR…TGIA) and 396–426 (QPRE…DQPQ). Residues 118-127 (TPPKRDTGIA) are compositionally biased toward basic and acidic residues. Residues 412–426 (PSPPPEPDLPPDQPQ) are compositionally biased toward pro residues.

This sequence belongs to the ESV1 family.

It is found in the plastid. It localises to the chloroplast stroma. The protein localises to the plastid stroma. Its function is as follows. Binds preferentially to highly ordered alpha-glucans, such as starch and crystalline maltodextrins. Involved in the organization of the starch granule matrix, thus influencing starch turnover by modulating the accessibility of starch polymers to modifying and degrading enzymes involved in phosphorylation, hydrolyzes and synthesis, including starch synthases (SSI and SSIII), starch phosphorylases (PHS1), isoamylase, beta-amylase, glucan water dikinase (GWD) and phosphoglucan water dikinase (PWD). Prevents GWD- and PWD-mediated starch phosphorylation, and subsequent degradation. Required for the control of starch degradation in leaves and starch distribution in nonphotosynthetic parts (e.g. cells immediately adjacent to veins, columella cells of root caps, stems, flowers and siliques) by limiting the hasty depletion of starch reserves during the night. Promotes gravitropic responses, negative in shoots but positive in roots, by maintaining starch granules (statoliths) accumulation in hypocotyls and roots columella, especially in dark conditions and in the endodermis, where starch is formed from transported glucose-6-phosphates. The polypeptide is Protein EARLY STARVATION 1, chloroplastic (Arabidopsis thaliana (Mouse-ear cress)).